Reading from the N-terminus, the 72-residue chain is MAKEDSIEMQGTILETLPNTMFRVELENGHVVIAHISGKMRKNYIRILTGDKVTVQLTPYDLTKGRIVFRAR.

In terms of domain architecture, S1-like spans 1–72 (MAKEDSIEMQ…TKGRIVFRAR (72 aa)).

Belongs to the IF-1 family. Component of the 30S ribosomal translation pre-initiation complex which assembles on the 30S ribosome in the order IF-2 and IF-3, IF-1 and N-formylmethionyl-tRNA(fMet); mRNA recruitment can occur at any time during PIC assembly.

It is found in the cytoplasm. Functionally, one of the essential components for the initiation of protein synthesis. Stabilizes the binding of IF-2 and IF-3 on the 30S subunit to which N-formylmethionyl-tRNA(fMet) subsequently binds. Helps modulate mRNA selection, yielding the 30S pre-initiation complex (PIC). Upon addition of the 50S ribosomal subunit IF-1, IF-2 and IF-3 are released leaving the mature 70S translation initiation complex. The sequence is that of Translation initiation factor IF-1 from Shewanella amazonensis (strain ATCC BAA-1098 / SB2B).